A 90-amino-acid polypeptide reads, in one-letter code: Probable Fe(2+)-trafficking protein (90 aa).

This sequence belongs to the Fe(2+)-trafficking protein family.

Functionally, could be a mediator in iron transactions between iron acquisition and iron-requiring processes, such as synthesis and/or repair of Fe-S clusters in biosynthetic enzymes. The chain is Probable Fe(2+)-trafficking protein from Vibrio vulnificus (strain CMCP6).